The chain runs to 60 residues: Mastoparan-VT6 (60 aa).

The N-terminal stretch at 1–27 is a signal peptide; the sequence is MKNTILILFTAFIALLGFFGMSAEALA. 4 AXPX repeats span residues 27 to 30, 31 to 34, 35 to 38, and 41 to 44; these read ADPK, ADPL, AGPN, and ADPE. A propeptide spanning residues 28 to 45 is cleaved from the precursor; the sequence is DPKADPLAGPNPDADPEA. A Leucine amide modification is found at Leu-59.

This sequence belongs to the MCD family. Mastoparan subfamily. In terms of tissue distribution, expressed by the venom gland.

Its subcellular location is the secreted. The synthetic peptide shows antimicrobial activities against Gram-negative bacteria (but not against all strains tested), Gram-positive bacteria (all strains tested) and the fungi C.albicans and C.parapsilosis. Exhibits little hemolytic activity against washed human erythrocytes. In Vespa tropica (Greater banded hornet), this protein is Mastoparan-VT6.